Reading from the N-terminus, the 504-residue chain is Maturase K (504 aa).

Belongs to the intron maturase 2 family. MatK subfamily.

The protein localises to the plastid. Its subcellular location is the chloroplast. In terms of biological role, usually encoded in the trnK tRNA gene intron. Probably assists in splicing its own and other chloroplast group II introns. The chain is Maturase K from Vigna mungo (Black gram).